The following is a 486-amino-acid chain: Protein nucleotidyltransferase YdiU (486 aa).

ATP contacts are provided by Gly-90, Gly-92, Arg-93, Lys-113, Asp-125, Gly-126, Arg-176, and Arg-183. Asp-252 serves as the catalytic Proton acceptor. 2 residues coordinate Mg(2+): Asn-253 and Asp-262. Asp-262 is a binding site for ATP.

This sequence belongs to the SELO family. Mg(2+) serves as cofactor. It depends on Mn(2+) as a cofactor.

The enzyme catalyses L-seryl-[protein] + ATP = 3-O-(5'-adenylyl)-L-seryl-[protein] + diphosphate. The catalysed reaction is L-threonyl-[protein] + ATP = 3-O-(5'-adenylyl)-L-threonyl-[protein] + diphosphate. It carries out the reaction L-tyrosyl-[protein] + ATP = O-(5'-adenylyl)-L-tyrosyl-[protein] + diphosphate. It catalyses the reaction L-histidyl-[protein] + UTP = N(tele)-(5'-uridylyl)-L-histidyl-[protein] + diphosphate. The enzyme catalyses L-seryl-[protein] + UTP = O-(5'-uridylyl)-L-seryl-[protein] + diphosphate. The catalysed reaction is L-tyrosyl-[protein] + UTP = O-(5'-uridylyl)-L-tyrosyl-[protein] + diphosphate. Nucleotidyltransferase involved in the post-translational modification of proteins. It can catalyze the addition of adenosine monophosphate (AMP) or uridine monophosphate (UMP) to a protein, resulting in modifications known as AMPylation and UMPylation. The sequence is that of Protein nucleotidyltransferase YdiU from Pseudomonas putida (strain GB-1).